Reading from the N-terminus, the 56-residue chain is PI-stichotoxin-Hcr2m (56 aa).

Residues 4–54 (CLEPKVVGPCTAYLRRFYFDSETGKCTPFIYGGCEGNGNNFETLRACRAIC) enclose the BPTI/Kunitz inhibitor domain. 3 disulfides stabilise this stretch: C4–C54, C13–C37, and C29–C50.

Belongs to the venom Kunitz-type family. Sea anemone type 2 potassium channel toxin subfamily.

The protein resides in the secreted. It is found in the nematocyst. This recombinant serine protease inhibitor inhibits trypsin (Ki=210 nM). In contrast to other sea anemone serine protease inhibitors, it does not significantly blocks histamine influence on intracellular calcium concentration in murine bone marrow-derived macrophages (tested at 1 and 10 uM). In vitro, it shows cytoprotective activity in the oxidative stress agent 6-hydroxydopamine (6-OHDA)-induced neurotoxicity model. In this model, it decreases reactive oxygen species (ROS) levels, and increases cell viability in a correlated manner. It is possible that the observed effect is due to the ability of this peptides to act as free-radical scavenger. In vivo, it shows analgesic activity, since it increases hot plate and tail flick withdrawal latencies, when using a mice thermal pain stimulation model. The protein is PI-stichotoxin-Hcr2m of Radianthus crispa (Leathery sea anemone).